The chain runs to 188 residues: dCTP deaminase (188 aa).

DCTP-binding positions include 111–116 (KSTYAR), 135–137 (TLE), glutamine 156, tyrosine 170, and glutamine 180. Glutamate 137 acts as the Proton donor/acceptor in catalysis.

Belongs to the dCTP deaminase family. As to quaternary structure, homotrimer.

It catalyses the reaction dCTP + H2O + H(+) = dUTP + NH4(+). Its pathway is pyrimidine metabolism; dUMP biosynthesis; dUMP from dCTP (dUTP route): step 1/2. In terms of biological role, catalyzes the deamination of dCTP to dUTP. This chain is dCTP deaminase, found in Pseudomonas putida (strain W619).